A 740-amino-acid chain; its full sequence is Autotransporter adhesin BtaE (740 aa).

An N-terminal signal peptide occupies residues 1-11 (MFGLSVNHAYA). The segment at 12–647 (GPGIFINDGT…LQTLDQANAY (636 aa)) is surface exposed passenger domain. The tract at residues 648–686 (TDKKFGKLNEDIVATRIEARQAAAIGLAAASLRYDDRPG) is outer membrane translocation of the passenger domain. 4 consecutive transmembrane segments (beta stranded) span residues 686-696 (GKISAAIGGGF), 700-710 (EGAVALGLGHT), 719-725 (NLSAATS), and 728-739 (NWGMGAGFSYTF). A translocator domain region spans residues 687 to 740 (KISAAIGGGFWRGEGAVALGLGHTSEDQRMRSNLSAATSGGNWGMGAGFSYTFN).

This sequence belongs to the autotransporter-2 (AT-2) (TC 1.B.40) family. As to quaternary structure, homotrimer.

It localises to the cell surface. The protein localises to the cell outer membrane. Functionally, binds to hyaluronic acid and epithelial cells, and is required for full virulence in the mouse model. The polypeptide is Autotransporter adhesin BtaE (Brucella suis biovar 1 (strain 1330)).